The primary structure comprises 439 residues: Tubulin beta chain (439 aa).

Positions 11, 69, 138, 142, 143, 144, 204, and 226 each coordinate GTP. E69 lines the Mg(2+) pocket.

This sequence belongs to the tubulin family. As to quaternary structure, dimer of alpha and beta chains. A typical microtubule is a hollow water-filled tube with an outer diameter of 25 nm and an inner diameter of 15 nM. Alpha-beta heterodimers associate head-to-tail to form protofilaments running lengthwise along the microtubule wall with the beta-tubulin subunit facing the microtubule plus end conferring a structural polarity. Microtubules usually have 13 protofilaments but different protofilament numbers can be found in some organisms and specialized cells. The cofactor is Mg(2+).

The protein localises to the cytoplasm. It is found in the cytoskeleton. In terms of biological role, tubulin is the major constituent of microtubules, a cylinder consisting of laterally associated linear protofilaments composed of alpha- and beta-tubulin heterodimers. Microtubules grow by the addition of GTP-tubulin dimers to the microtubule end, where a stabilizing cap forms. Below the cap, tubulin dimers are in GDP-bound state, owing to GTPase activity of alpha-tubulin. The polypeptide is Tubulin beta chain (TUB2) (Encephalitozoon intestinalis (Microsporidian parasite)).